We begin with the raw amino-acid sequence, 421 residues long: Vinorine synthase (421 aa).

Catalysis depends on proton acceptor residues H160 and D362.

Belongs to the plant acyltransferase family. In terms of assembly, monomer. As to expression, mainly expressed in roots and, to a lower level, in leaves.

It carries out the reaction 16-epivellosimine + acetyl-CoA = vinorine + CoA. It participates in alkaloid biosynthesis; ajmaline biosynthesis. With respect to regulation, complete inhibition by 4-(2-aminoethyl)-benzenesulfonyl fluoride (AEBSF), N-tosyl-L-phenylalanine chloromethylketone (TPCK), Hg(2+) and diethyl-pyrocarbonate (DEPC). 50% inhibition by N-(N-(L-3-trans-carboxirane-2-carbonyl)-L-leucyl)-agmanitine (E-64), N-alpha-p-tosyl-L-lysine chloromethylketone (TLCK) and phenylmethylsulfonyl fluoride (PMSF). Its function is as follows. Acetyltransferase involved in the biosynthesis of ajmaline-type monoterpenoid indole alkaloids (MIAs) natural products, important plant-derived pharmaceuticals used in the therapy of heart disorders. Catalyzes the conversion of 16-epivellosimine to vinorine, precursor of vomilenine, an intermediate chemical in the biosynthesis of ajmaline. Acts on gardneral, but not on polyneuridine aldehyde or N-methylgardneral. This is Vinorine synthase from Rauvolfia serpentina (Serpentine wood).